The chain runs to 259 residues: Thiazole synthase (259 aa).

The Schiff-base intermediate with DXP role is filled by lysine 99. Residues glycine 161, 187–188 (AG), and 209–210 (NT) contribute to the 1-deoxy-D-xylulose 5-phosphate site.

It belongs to the ThiG family. As to quaternary structure, homotetramer. Forms heterodimers with either ThiH or ThiS.

It localises to the cytoplasm. The catalysed reaction is [ThiS sulfur-carrier protein]-C-terminal-Gly-aminoethanethioate + 2-iminoacetate + 1-deoxy-D-xylulose 5-phosphate = [ThiS sulfur-carrier protein]-C-terminal Gly-Gly + 2-[(2R,5Z)-2-carboxy-4-methylthiazol-5(2H)-ylidene]ethyl phosphate + 2 H2O + H(+). The protein operates within cofactor biosynthesis; thiamine diphosphate biosynthesis. Functionally, catalyzes the rearrangement of 1-deoxy-D-xylulose 5-phosphate (DXP) to produce the thiazole phosphate moiety of thiamine. Sulfur is provided by the thiocarboxylate moiety of the carrier protein ThiS. In vitro, sulfur can be provided by H(2)S. The chain is Thiazole synthase from Nautilia profundicola (strain ATCC BAA-1463 / DSM 18972 / AmH).